The chain runs to 490 residues: 7-ethoxycoumarin O-deethylase (490 aa).

Position 432 (Cys-432) interacts with heme.

The protein belongs to the cytochrome P450 family. The cofactor is heme.

Capable of dealkylating a model xenobiotic compound, 7-ethoxycoumarin. Metabolizes with high efficiency a wide range of xenobiotics, including alkoxycoumarins, alkoxyresorufins, and several herbicides of the class of phenylureas. Catalyzes the double N-dealkylation (oxidative N-demethylation) of phenylureas such as chlortoluron and isoproturon with turnover rates comparable to those reported for physiological substrates and produces non-phytotoxic compounds. Could be used for control of herbicide tolerance and selectivity, as well as soil and groundwater bioremediation. This Helianthus tuberosus (Jerusalem artichoke) protein is 7-ethoxycoumarin O-deethylase (CYP76B1).